A 357-amino-acid polypeptide reads, in one-letter code: Tetraacyldisaccharide 4'-kinase (357 aa).

54-61 (TVGGAGKT) serves as a coordination point for ATP.

This sequence belongs to the LpxK family.

It carries out the reaction a lipid A disaccharide + ATP = a lipid IVA + ADP + H(+). The protein operates within glycolipid biosynthesis; lipid IV(A) biosynthesis; lipid IV(A) from (3R)-3-hydroxytetradecanoyl-[acyl-carrier-protein] and UDP-N-acetyl-alpha-D-glucosamine: step 6/6. In terms of biological role, transfers the gamma-phosphate of ATP to the 4'-position of a tetraacyldisaccharide 1-phosphate intermediate (termed DS-1-P) to form tetraacyldisaccharide 1,4'-bis-phosphate (lipid IVA). The protein is Tetraacyldisaccharide 4'-kinase of Rhizobium leguminosarum bv. trifolii (strain WSM2304).